Here is a 215-residue protein sequence, read N- to C-terminus: Probable transaldolase (215 aa).

The active-site Schiff-base intermediate with substrate is K83.

The protein belongs to the transaldolase family. Type 3B subfamily.

Its subcellular location is the cytoplasm. It catalyses the reaction D-sedoheptulose 7-phosphate + D-glyceraldehyde 3-phosphate = D-erythrose 4-phosphate + beta-D-fructose 6-phosphate. It participates in carbohydrate degradation; pentose phosphate pathway; D-glyceraldehyde 3-phosphate and beta-D-fructose 6-phosphate from D-ribose 5-phosphate and D-xylulose 5-phosphate (non-oxidative stage): step 2/3. In terms of biological role, transaldolase is important for the balance of metabolites in the pentose-phosphate pathway. The protein is Probable transaldolase of Clostridium perfringens (strain SM101 / Type A).